The following is a 254-amino-acid chain: ATP synthase subunit a (254 aa).

Residues 1-6 (MAFLIH) constitute a propeptide, removed in mature form. 7 helical membrane-spanning segments follow: residues 32-52 (LTNL…LHIM), 83-103 (IGAA…FILI), 119-139 (SIMV…ILGL), 146-166 (FFSF…LVPI), 182-202 (LFAN…FLAP), 207-227 (TFII…IIGL), and 228-248 (EIAV…SYLK).

The protein belongs to the ATPase A chain family. F-type ATPases have 2 components, CF(1) - the catalytic core - and CF(0) - the membrane proton channel. CF(1) has five subunits: alpha(3), beta(3), gamma(1), delta(1), epsilon(1). CF(0) has three main subunits: a, b and c.

The protein resides in the mitochondrion inner membrane. Its function is as follows. Mitochondrial membrane ATP synthase (F(1)F(0) ATP synthase or Complex V) produces ATP from ADP in the presence of a proton gradient across the membrane which is generated by electron transport complexes of the respiratory chain. F-type ATPases consist of two structural domains, F(1) - containing the extramembraneous catalytic core and F(0) - containing the membrane proton channel, linked together by a central stalk and a peripheral stalk. During catalysis, ATP synthesis in the catalytic domain of F(1) is coupled via a rotary mechanism of the central stalk subunits to proton translocation. Key component of the proton channel; it may play a direct role in the translocation of protons across the membrane. This is ATP synthase subunit a (ATP6) from Mycosarcoma maydis (Corn smut fungus).